Here is a 458-residue protein sequence, read N- to C-terminus: Ammonium transporter Rh type B (458 aa).

Residues Met-1–Leu-13 are Cytoplasmic-facing. Residues Gln-14–Val-34 form a helical membrane-spanning segment. Topologically, residues Arg-35 to Tyr-61 are extracellular. N-linked (GlcNAc...) asparagine glycosylation occurs at Asn-49. A helical membrane pass occupies residues Pro-62–Leu-82. Residues Gln-83–Gly-86 lie on the Cytoplasmic side of the membrane. A helical transmembrane segment spans residues Phe-87–Val-107. Topologically, residues Gln-108 to Glu-124 are extracellular. A helical transmembrane segment spans residues Ser-125–Gly-145. Residues Lys-146–Pro-149 are Cytoplasmic-facing. A helical transmembrane segment spans residues Thr-150 to Leu-170. Residues Leu-171–Asp-178 are Extracellular-facing. The helical transmembrane segment at Ala-179–Tyr-201 threads the bilayer. At Arg-202 to Asp-219 the chain is on the cytoplasmic side. A helical membrane pass occupies residues Leu-220 to Leu-240. Topologically, residues Thr-241–Ala-251 are extracellular. The chain crosses the membrane as a helical span at residues Leu-252–Val-272. At Gly-273–His-282 the chain is on the cytoplasmic side. Residues Ile-283 to Thr-303 traverse the membrane as a helical segment. Pro-304 is a topological domain (extracellular). The chain crosses the membrane as a helical span at residues Phe-305–Phe-325. Residues Thr-326–Gly-346 are Cytoplasmic-facing. A helical membrane pass occupies residues Met-347 to Ala-367. The Extracellular portion of the chain corresponds to Tyr-368–Gln-393. The helical transmembrane segment at Leu-394–Leu-414 threads the bilayer. Topologically, residues Leu-415–Ala-458 are cytoplasmic. An interaction with ANK3 region spans residues Lys-416–Pro-424. A disordered region spans residues Gln-436–Ala-458.

The protein belongs to the ammonium transporter (TC 2.A.49) family. Rh subfamily. Interacts (via C-terminus) with ANK2 and ANK3; required for targeting to the basolateral membrane. Post-translationally, N-glycosylated. In terms of tissue distribution, specifically expressed in kidney. Also detected in liver and ovary.

The protein resides in the cell membrane. It localises to the basolateral cell membrane. The enzyme catalyses NH4(+)(in) = NH4(+)(out). The catalysed reaction is methylamine(out) = methylamine(in). It carries out the reaction CO2(out) = CO2(in). Functionally, ammonium transporter involved in the maintenance of acid-base homeostasis. Transports ammonium and its related derivative methylammonium across the basolateral plasma membrane of epithelial cells likely contributing to renal transepithelial ammonia transport and ammonia metabolism. May transport either NH4(+) or NH3 ammonia species predominantly mediating an electrogenic NH4(+) transport. May act as a CO2 channel providing for renal acid secretion. The protein is Ammonium transporter Rh type B of Homo sapiens (Human).